A 339-amino-acid polypeptide reads, in one-letter code: Acyl-CoA dehydrogenase FadE28 (339 aa).

Residues arginine 227, glutamine 238, histidine 295, and glycine 299 each coordinate FAD.

This sequence belongs to the acyl-CoA dehydrogenase family. Heterotetramer composed of FadE28 and FadE29. It depends on FAD as a cofactor.

It carries out the reaction 3-oxochol-4-en-22-oyl-CoA + A = 3-oxochola-4,17-dien-22-oyl-CoA + AH2. Its pathway is steroid metabolism; cholesterol degradation. Its function is as follows. Involved in the third cycle of side chain dehydrogenation in the beta-oxidation of cholesterol catabolism. May play an important role for the initial macrophage invasion, possibly in response to the acidification of phagosome. It contributes partly to the virulence by increasing the efficiency of beta-oxidation. Catalyzes the dehydrogenation of 2'-propanoyl-CoA ester side chains of 3-oxo-4-pregnene-20-carboxyl-CoA (3-OPC-CoA) to yield 3-oxo-4,17-pregnadiene-20-carboxyl-CoA (3-OPDC-CoA). Also able to dehydrogenate steroyl-CoA such as 3-oxo-chol-4-en-24-oyl-CoA (3-OCO-CoA), 1beta-(2'-propanoyl-CoA)-3a-alpha-H-7a-beta-methylhexahydro-4-indanone (indanone-CoA ester), hexahydroindanone and pregenenone. In Mycobacterium tuberculosis (strain ATCC 25618 / H37Rv), this protein is Acyl-CoA dehydrogenase FadE28 (fadE28).